A 187-amino-acid chain; its full sequence is UPF0340 protein SPT_0687 (187 aa).

The protein belongs to the UPF0340 family.

In Streptococcus pneumoniae (strain Taiwan19F-14), this protein is UPF0340 protein SPT_0687.